Consider the following 574-residue polypeptide: MRDPGAAAPLSSLGLCALVLALLGALSAGAGAQPYHGEKGISVPDHGFCQPISIPLCTDIAYNQTILPNLLGHTNQEDAGLEVHQFYPLVKVQCSPELRFFLCSMYAPVCTVLDQAIPPCRSLCERARQGCEALMNKFGFQWPERLRCENFPVHGAGEICVGQNTSDGSGGPGGGPTAYPTAPYLPDLPFTALPPGASDGRGRPAFPFSCPRQLKVPPYLGYRFLGERDCGAPCEPGRANGLMYFKEEERRFARLWVGVWSVLCCASTLFTVLTYLVDMRRFSYPERPIIFLSGCYFMVAVAHVAGFLLEDRAVCVERFSDDGYRTVAQGTKKEGCTILFMVLYFFGMASSIWWVILSLTWFLAAGMKWGHEAIEANSQYFHLAAWAVPAVKTITILAMGQVDGDLLSGVCYVGLSSVDALRGFVLAPLFVYLFIGTSFLLAGFVSLFRIRTIMKHDGTKTEKLEKLMVRIGVFSVLYTVPATIVLACYFYEQAFREHWERTWLLQTCKSYAVPCPPGHFPPMSPDFTVFMIKYLMTMIVGITTGFWIWSGKTLQSWRRFYHRLSHSSKGETAV.

An N-terminal signal peptide occupies residues 1 to 32 (MRDPGAAAPLSSLGLCALVLALLGALSAGAGA). The Extracellular segment spans residues 33–256 (QPYHGEKGIS…EEERRFARLW (224 aa)). Residues 44–163 (PDHGFCQPIS…HGAGEICVGQ (120 aa)) form the FZ domain. 5 cysteine pairs are disulfide-bonded: Cys-49/Cys-110, Cys-57/Cys-103, Cys-94/Cys-131, Cys-120/Cys-160, and Cys-124/Cys-148. A glycan (N-linked (GlcNAc...) asparagine) is linked at Asn-63. The N-linked (GlcNAc...) asparagine glycan is linked to Asn-164. Residues 257–277 (VGVWSVLCCASTLFTVLTYLV) form a helical membrane-spanning segment. Residues 278–288 (DMRRFSYPERP) lie on the Cytoplasmic side of the membrane. The helical transmembrane segment at 289-309 (IIFLSGCYFMVAVAHVAGFLL) threads the bilayer. At 310–336 (EDRAVCVERFSDDGYRTVAQGTKKEGC) the chain is on the extracellular side. The chain crosses the membrane as a helical span at residues 337-357 (TILFMVLYFFGMASSIWWVIL). The Cytoplasmic portion of the chain corresponds to 358–379 (SLTWFLAAGMKWGHEAIEANSQ). Residues 380 to 400 (YFHLAAWAVPAVKTITILAMG) traverse the membrane as a helical segment. The Extracellular portion of the chain corresponds to 401–423 (QVDGDLLSGVCYVGLSSVDALRG). A helical transmembrane segment spans residues 424-444 (FVLAPLFVYLFIGTSFLLAGF). Residues 445 to 470 (VSLFRIRTIMKHDGTKTEKLEKLMVR) are Cytoplasmic-facing. Residues 471–491 (IGVFSVLYTVPATIVLACYFY) traverse the membrane as a helical segment. At 492–528 (EQAFREHWERTWLLQTCKSYAVPCPPGHFPPMSPDFT) the chain is on the extracellular side. A helical membrane pass occupies residues 529–549 (VFMIKYLMTMIVGITTGFWIW). The Cytoplasmic segment spans residues 550 to 574 (SGKTLQSWRRFYHRLSHSSKGETAV). The short motif at 552 to 557 (KTLQSW) is the Lys-Thr-X-X-X-Trp motif, mediates interaction with the PDZ domain of Dvl family members element. The PDZ-binding motif lies at 572-574 (TAV).

This sequence belongs to the G-protein coupled receptor Fz/Smo family. In terms of assembly, interacts with MAGI3. Interacts with DVL1. Interacts with CCDC88C/DAPLE; the interaction displaces DVL1 from FZD7, leading to inhibition of canonical Wnt signaling and triggering of non-canonical Wnt responses. Interacts with MYOC. Binds to SDCBP; this interaction is increased by inositol trisphosphate (IP3). Interacts with glypican GPC3. As to quaternary structure, (Microbial infection) Interacts with C.difficile toxin TcdB; frizzled receptors constitute the major host receptors for TcdB in the colonic epithelium. In terms of processing, ubiquitinated by ZNRF3, leading to its degradation by the proteasome. As to expression, high expression in adult skeletal muscle and fetal kidney, followed by fetal lung, adult heart, brain, and placenta. Specifically expressed in squamous cell esophageal carcinomas.

The protein localises to the cell membrane. The protein resides in the endosome membrane. In terms of biological role, receptor for Wnt proteins. Most frizzled receptors are coupled to the beta-catenin canonical signaling pathway, which leads to the activation of disheveled proteins, inhibition of GSK-3 kinase, nuclear accumulation of beta-catenin and activation of Wnt target genes. A second signaling pathway involving PKC and calcium fluxes has been seen for some family members, but it is not yet clear if it represents a distinct pathway or if it can be integrated in the canonical pathway, as PKC seems to be required for Wnt-mediated inactivation of GSK-3 kinase. Both pathways seem to involve interactions with G-proteins. Activation by WNT8 induces expression of beta-catenin target genes. Following ligand activation, binds to CCDC88C/DAPLE which displaces DVL1 from FZD7 and leads to inhibition of canonical Wnt signaling, activation of G-proteins by CCDC88C and triggering of non-canonical Wnt responses. May be involved in transduction and intercellular transmission of polarity information during tissue morphogenesis and/or in differentiated tissues. Its function is as follows. (Microbial infection) Acts as a receptor for C.difficile toxin TcdB in the colonic epithelium. In Homo sapiens (Human), this protein is Frizzled-7 (FZD7).